The chain runs to 310 residues: Carbamate kinase 1 (310 aa).

The protein belongs to the carbamate kinase family.

The protein resides in the cytoplasm. It catalyses the reaction hydrogencarbonate + NH4(+) + ATP = carbamoyl phosphate + ADP + H2O + H(+). It participates in metabolic intermediate metabolism; carbamoyl phosphate degradation; CO(2) and NH(3) from carbamoyl phosphate: step 1/1. The protein is Carbamate kinase 1 (arcC1) of Staphylococcus aureus (strain COL).